A 238-amino-acid chain; its full sequence is 5'-deoxynucleotidase YBR242W (238 aa).

Positions 77-183 (ISDHMYRLSI…VKDIDKYEML (107 aa)) constitute an HD domain. Positions 80, 108, 109, 112, 117, 118, and 178 each coordinate a divalent metal cation.

It belongs to the HDDC2 family. In terms of assembly, homodimer. It depends on Mn(2+) as a cofactor. Requires Co(2+) as cofactor. Mg(2+) serves as cofactor.

The catalysed reaction is a 2'-deoxyribonucleoside 5'-phosphate + H2O = a 2'-deoxyribonucleoside + phosphate. Catalyzes the dephosphorylation of the nucleoside 5'-monophosphates deoxyadenosine monophosphate (dAMP), deoxycytidine monophosphate (dCMP), deoxyguanosine monophosphate (dGMP) and deoxythymidine monophosphate (dTMP). This chain is 5'-deoxynucleotidase YBR242W, found in Saccharomyces cerevisiae (strain ATCC 204508 / S288c) (Baker's yeast).